A 201-amino-acid chain; its full sequence is Large ribosomal subunit protein uL4 (201 aa).

A disordered region spans residues 46-71 (QKTRAEITGTGKKPWRQKGTGRARAG).

The protein belongs to the universal ribosomal protein uL4 family. As to quaternary structure, part of the 50S ribosomal subunit.

One of the primary rRNA binding proteins, this protein initially binds near the 5'-end of the 23S rRNA. It is important during the early stages of 50S assembly. It makes multiple contacts with different domains of the 23S rRNA in the assembled 50S subunit and ribosome. In terms of biological role, forms part of the polypeptide exit tunnel. This Shewanella amazonensis (strain ATCC BAA-1098 / SB2B) protein is Large ribosomal subunit protein uL4.